The chain runs to 392 residues: Solute carrier family 35 member B1 (392 aa).

The interval 1 to 40 (MSLTKKIKNEKSLKQEKQTDQLKSNLRNNNNNINNKSKPK) is disordered. Positions 7–20 (IKNEKSLKQEKQTD) are enriched in basic and acidic residues. Over residues 25–35 (NLRNNNNNINN) the composition is skewed to low complexity. Helical transmembrane passes span 57–77 (ELFFIFCVGGIYIFYLLYGLV), 97–117 (AFLLALQCFFNMVSAWLVSLV), 124–144 (NTPFMKYGFVSMLLVISTFLS), 155–175 (TQVLAKSCKPIPVIFMGLLLF), 179–199 (YPFLKYIVVIVISLGISLFML), 215–235 (HLFGNFILFVSLMMDGVMGPF), 247–267 (ATSMMLNTNIWNLGLFSIMAF), 285–305 (VIKLILAFCITSAIGQQFIFL), and 341–361 (LQWAAICMVFGGLILDLYISY). The Di-lysine motif motif lies at 389–392 (KKSL).

It belongs to the nucleotide-sugar transporter family. SLC35B subfamily.

The protein localises to the endoplasmic reticulum membrane. In terms of biological role, probable sugar transporter. The protein is Solute carrier family 35 member B1 (slc35b1) of Dictyostelium discoideum (Social amoeba).